Here is a 104-residue protein sequence, read N- to C-terminus: Small ribosomal subunit protein uS10 (104 aa).

It belongs to the universal ribosomal protein uS10 family. As to quaternary structure, part of the 30S ribosomal subunit.

In terms of biological role, involved in the binding of tRNA to the ribosomes. The sequence is that of Small ribosomal subunit protein uS10 from Buchnera aphidicola subsp. Baizongia pistaciae (strain Bp).